Reading from the N-terminus, the 304-residue chain is Large ribosomal subunit protein uL2m (304 aa).

A mitochondrion-targeting transit peptide spans 1–60; sequence MALCALASALRSLSLASPAITARVPTLLPVGQSNVLLQLPSALALPAHRPVHMSADRSAK.

Belongs to the universal ribosomal protein uL2 family. As to quaternary structure, component of the mitochondrial ribosome large subunit (39S) which comprises a 16S rRNA and about 50 distinct proteins.

It is found in the mitochondrion. The protein is Large ribosomal subunit protein uL2m (Mrpl2) of Rattus norvegicus (Rat).